Reading from the N-terminus, the 663-residue chain is DNA ligase (663 aa).

NAD(+)-binding positions include D33–D37, S82–I83, and E112. Residue K114 is the N6-AMP-lysine intermediate of the active site. Residues R135, E171, K285, and K309 each coordinate NAD(+). Positions 403, 406, 419, and 424 each coordinate Zn(2+). One can recognise a BRCT domain in the interval D581–S663.

The protein belongs to the NAD-dependent DNA ligase family. LigA subfamily. Mg(2+) serves as cofactor. Requires Mn(2+) as cofactor.

The enzyme catalyses NAD(+) + (deoxyribonucleotide)n-3'-hydroxyl + 5'-phospho-(deoxyribonucleotide)m = (deoxyribonucleotide)n+m + AMP + beta-nicotinamide D-nucleotide.. Its function is as follows. DNA ligase that catalyzes the formation of phosphodiester linkages between 5'-phosphoryl and 3'-hydroxyl groups in double-stranded DNA using NAD as a coenzyme and as the energy source for the reaction. It is essential for DNA replication and repair of damaged DNA. The protein is DNA ligase of Chlamydia trachomatis serovar L2 (strain ATCC VR-902B / DSM 19102 / 434/Bu).